Consider the following 472-residue polypeptide: Uronate isomerase (472 aa).

Belongs to the metallo-dependent hydrolases superfamily. Uronate isomerase family.

It catalyses the reaction D-glucuronate = D-fructuronate. It carries out the reaction aldehydo-D-galacturonate = keto-D-tagaturonate. The protein operates within carbohydrate metabolism; pentose and glucuronate interconversion. The protein is Uronate isomerase of Nostoc punctiforme (strain ATCC 29133 / PCC 73102).